The chain runs to 257 residues: Glucanase inhibitor protein 1 (257 aa).

A signal peptide spans 1 to 28; that stretch reads MKVFPALTSALVALGTAGVEAEHVQRSL. Residues 29–256 form the Peptidase S1 domain; the sequence is VMGGGTVPVG…GLEWINSVIK (228 aa). Cysteines 56 and 72 form a disulfide. Asn-107 and Asn-180 each carry an N-linked (GlcNAc...) asparagine glycan. Cystine bridges form between Cys-181/Cys-191 and Cys-201/Cys-232. Asn-213 is a glycosylation site (N-linked (GlcNAc...) asparagine).

This sequence belongs to the peptidase S1 family. In terms of assembly, interacts with host endoglucanases EGaseA.

It is found in the secreted. Secreted effector that suppresses host plant glucan elicitor-mediated defense responses. Targets host endoglucanase EGaseA and inhibits the EGaseA-mediated release of elicitor-active glucan oligosaccharides from P.sojae cell walls. In Phytophthora sojae (Soybean stem and root rot agent), this protein is Glucanase inhibitor protein 1.